The chain runs to 193 residues: Orotate phosphoribosyltransferase (193 aa).

Residue 114–122 (EDVITTGGS) coordinates 5-phospho-alpha-D-ribose 1-diphosphate. Residues T118 and R146 each coordinate orotate.

This sequence belongs to the purine/pyrimidine phosphoribosyltransferase family. PyrE subfamily. As to quaternary structure, homodimer. The cofactor is Mg(2+).

It carries out the reaction orotidine 5'-phosphate + diphosphate = orotate + 5-phospho-alpha-D-ribose 1-diphosphate. It participates in pyrimidine metabolism; UMP biosynthesis via de novo pathway; UMP from orotate: step 1/2. Functionally, catalyzes the transfer of a ribosyl phosphate group from 5-phosphoribose 1-diphosphate to orotate, leading to the formation of orotidine monophosphate (OMP). The sequence is that of Orotate phosphoribosyltransferase from Chlorobium phaeobacteroides (strain DSM 266 / SMG 266 / 2430).